Here is a 201-residue protein sequence, read N- to C-terminus: Small ribosomal subunit protein uS4 (201 aa).

One can recognise an S4 RNA-binding domain in the interval 91–151; sequence SRLDNVVYRA…EKSQKMNWFE (61 aa).

The protein belongs to the universal ribosomal protein uS4 family. As to quaternary structure, part of the 30S ribosomal subunit. Contacts protein S5. The interaction surface between S4 and S5 is involved in control of translational fidelity.

In terms of biological role, one of the primary rRNA binding proteins, it binds directly to 16S rRNA where it nucleates assembly of the body of the 30S subunit. With S5 and S12 plays an important role in translational accuracy. This is Small ribosomal subunit protein uS4 from Corynebacterium efficiens (strain DSM 44549 / YS-314 / AJ 12310 / JCM 11189 / NBRC 100395).